The sequence spans 185 residues: 4-nitrophenol 4-monooxygenase/4-nitrocatechol 2-monooxygenase, reductase component (185 aa).

Belongs to the non-flavoprotein flavin reductase family. The 4-NP/4-NCA monooxygenase is composed of an oxygenase component NpcA and a reductase component NpcB.

It catalyses the reaction 4-nitrophenol + NADH + O2 + H(+) = 4-nitrocatechol + NAD(+) + H2O. The catalysed reaction is 4-nitrocatechol + NADPH + O2 = 2-hydroxy-1,4-benzoquinone + nitrite + NADP(+) + H2O. It carries out the reaction 4-nitrocatechol + NADH + O2 = 2-hydroxy-1,4-benzoquinone + nitrite + NAD(+) + H2O. It participates in aromatic compound metabolism. The protein operates within xenobiotic degradation. With respect to regulation, inhibited by methimazole. Its function is as follows. Involved in the degradation of para-nitrophenol (4-NP). Catalyzes both the initial hydroxylation of 4-NP to produce 4-nitrocatechol (4-NCA) and the subsequent oxidative release of the nitro group from 4-NCA to produce 2-hydroxy-1,4-benzoquinone. It can also use 4-nitroresorcinol as substrate with a rate of nitrite release similar to that observed with the two physiological substrates, 4-PN and 4-NCA. This chain is 4-nitrophenol 4-monooxygenase/4-nitrocatechol 2-monooxygenase, reductase component (npcB), found in Rhodococcus opacus (Nocardia opaca).